The chain runs to 90 residues: Small ribosomal subunit protein bS18 (90 aa).

It belongs to the bacterial ribosomal protein bS18 family. In terms of assembly, part of the 30S ribosomal subunit. Forms a tight heterodimer with protein bS6.

Functionally, binds as a heterodimer with protein bS6 to the central domain of the 16S rRNA, where it helps stabilize the platform of the 30S subunit. In Bordetella petrii (strain ATCC BAA-461 / DSM 12804 / CCUG 43448), this protein is Small ribosomal subunit protein bS18.